A 257-amino-acid polypeptide reads, in one-letter code: Flap endonuclease Xni (257 aa).

Asp112 contacts Mg(2+). Residues Glu169–Leu256 form the 5'-3' exonuclease domain. Positions 179, 180, 188, 190, and 193 each coordinate K(+). Residues Gly192–Ser197 form an interaction with DNA region.

The protein belongs to the Xni family. The cofactor is Mg(2+). It depends on K(+) as a cofactor.

Its function is as follows. Has flap endonuclease activity. During DNA replication, flap endonucleases cleave the 5'-overhanging flap structure that is generated by displacement synthesis when DNA polymerase encounters the 5'-end of a downstream Okazaki fragment. In Pseudoalteromonas translucida (strain TAC 125), this protein is Flap endonuclease Xni.